The following is a 289-amino-acid chain: WUSCHEL-related homeobox 1 (289 aa).

The segment covering 1–11 has biased composition (low complexity); sequence MDHMQQQQRQQ. A disordered region spans residues 1–34; sequence MDHMQQQQRQQVGGGGGEEVAGRGGVPVCRPSGT. Residues 12–25 show a composition bias toward gly residues; the sequence is VGGGGGEEVAGRGG. Residues 31–96 constitute a DNA-binding region (homeobox; WUS-type); the sequence is PSGTRWTPTT…NHKARERQKK (66 aa).

Belongs to the WUS homeobox family. As to quaternary structure, interacts with TPR1, TPR2 and TPR3. In terms of tissue distribution, expressed in young leaf primordia. Expressed in branch an floral meristems. Transiently expressed in the shoot apex.

The protein localises to the nucleus. In terms of biological role, transcription repressor required for the formation and development of tiller buds and panicles. Required for tiller formation and female sterility. Required for the early developmental stages of axillary meristem formation. Plays a role in maintaining the axillary premeristem zone and in promoting the formation of the axillary meristem by promoting OSH1 expression. Does not seem to be involved in maintenance of the shoot apical meristem (SAM). The chain is WUSCHEL-related homeobox 1 from Oryza sativa subsp. japonica (Rice).